The sequence spans 312 residues: Elongation factor Ts (312 aa).

An involved in Mg(2+) ion dislocation from EF-Tu region spans residues 84-87 (TDFL).

This sequence belongs to the EF-Ts family.

The protein localises to the cytoplasm. Its function is as follows. Associates with the EF-Tu.GDP complex and induces the exchange of GDP to GTP. It remains bound to the aminoacyl-tRNA.EF-Tu.GTP complex up to the GTP hydrolysis stage on the ribosome. This chain is Elongation factor Ts, found in Caulobacter sp. (strain K31).